A 267-amino-acid chain; its full sequence is Large ribosomal subunit protein mL57 (267 aa).

The span at 43 to 54 (SSSAVQQEQDAS) shows a compositional bias: low complexity. The interval 43–73 (SSSAVQQEQDASGTSSSQQPRPRWSYTPERM) is disordered.

The protein belongs to the ribonuclease III family. Mitochondrion-specific ribosomal protein mL57 subfamily. In terms of assembly, component of the mitochondrial large ribosomal subunit (mt-LSU). Mature N.crassa 74S mitochondrial ribosomes consist of a small (37S) and a large (54S) subunit. The 37S small subunit contains a 16S ribosomal RNA (16S mt-rRNA) and 32 different proteins. The 54S large subunit contains a 23S rRNA (23S mt-rRNA) and 42 different proteins. mL57 forms a heterodimer with mL44 and stabilizes rRNA expansion segments 1/2 at a membrane-facing protuberance close to the point of attachment of the ribosome to the translocon in the membrane.

Its subcellular location is the mitochondrion. Functionally, component of the mitochondrial ribosome (mitoribosome), a dedicated translation machinery responsible for the synthesis of mitochondrial genome-encoded proteins, including at least some of the essential transmembrane subunits of the mitochondrial respiratory chain. The mitoribosomes are attached to the mitochondrial inner membrane and translation products are cotranslationally integrated into the membrane. This is Large ribosomal subunit protein mL57 (mrpl15) from Neurospora crassa (strain ATCC 24698 / 74-OR23-1A / CBS 708.71 / DSM 1257 / FGSC 987).